Here is a 542-residue protein sequence, read N- to C-terminus: Nibrin homolog (542 aa).

Residues 25 to 90 (YKVGRKGCDI…YGTFVKTDLG (66 aa)) enclose the FHA domain. In terms of domain architecture, BRCT spans 119 to 195 (IYRLSLIPLV…KTIILTNWVM (77 aa)). Positions 409 to 430 (SRGHMDEKNSSDSVTIRRDRND) are disordered. Positions 465-500 (VDFKRFRKGNVTCGNSFSSLIPFAKDPYKEYDSWDV) are involved in MRE11-binding.

The protein belongs to the Nibrin family. Component of the MRN complex composed of two heterodimers RAD50 and MRE11 associated with a single NBS1.

The protein resides in the nucleus. It localises to the chromosome. In terms of biological role, component of the MRN complex, which plays a central role in double-strand break (DSB) repair, DNA recombination, maintenance of telomere integrity and meiosis. The MRN complex is involved in the repair of DNA double-strand breaks (DSBs) via homologous recombination (HR), an error-free mechanism which primarily occurs during S and G2 phases. The complex (1) mediates the end resection of damaged DNA, which generates proper single-stranded DNA, a key initial steps in HR, and is (2) required for the recruitment of other repair factors and efficient activation of ATM and ATR upon DNA damage. The MRN complex possesses single-strand endonuclease activity and double-strand-specific 3'-5' exonuclease activity, which are provided by MRE11, to initiate end resection, which is required for single-strand invasion and recombination. Within the MRN complex, NBS1 acts as a protein-protein adapter, which specifically recognizes and binds phosphorylated proteins, promoting their recruitment to DNA damage sites. Recruits MRE11 and RAD50 components of the MRN complex to DSBs in response to DNA damage. This chain is Nibrin homolog, found in Arabidopsis thaliana (Mouse-ear cress).